A 180-amino-acid chain; its full sequence is MKKVEDYIRTIPDFPEPGIMFRDVTSILQDAEGFKLAIDEMIKLLDGVDCDVIAGAESRGFIFGAPLAYALGKPSVLVRKKGKLPCETIEKTYDLEYGTATIEMHKDAIKPGQKVVVVDDLIATGGTIEAACQLIEELGGEVSKIVFLMELAGLNGREKLKYDVASVCYLRGKIITDFLG.

This sequence belongs to the purine/pyrimidine phosphoribosyltransferase family. In terms of assembly, homodimer.

It localises to the cytoplasm. It carries out the reaction AMP + diphosphate = 5-phospho-alpha-D-ribose 1-diphosphate + adenine. The protein operates within purine metabolism; AMP biosynthesis via salvage pathway; AMP from adenine: step 1/1. In terms of biological role, catalyzes a salvage reaction resulting in the formation of AMP, that is energically less costly than de novo synthesis. This chain is Adenine phosphoribosyltransferase, found in Butyrivibrio fibrisolvens.